The chain runs to 963 residues: MERREEQLGAAGAGAAPALDFTVENVEKALHQLYYDPNIDNKNLAQKWLMQAQVSPQAWHFSWQLLQPDKVPEIQYFGASALHIKISRYWSDIPTDQYESLKAQLFTQITRFASGSKIVLTRLCVALASLALSMMPDAWPCAVADMVRLFQAEDSPVDSQGRCLALLELLTVLPEEFQTSRLPQYRKGLVRTSLAVECGTVFPLLEQLLQQPSSPSCVRQKVLKCFSSWVQLEVPLQDCEALIQAAFAALQDSELFDSSVEAIVNAISQPDAQRYVNTLLKLIPLVLGLQEQLRQAVQNGDMETSHGICRIAVALGENHSRALLDQVEHWQSFLALVNMIMFCTGIPGHYPVNETTSSLTLTFWYTLQDDILSFEAEKQAVYQQVYRPVYFQLVDVLLHKAQFPSDEEYGFWSSDEKEQFRIYRVDISDTLMYVYEMLGAELLSNLYDKLGRLLTSSEEPYSWQHTEALLYGFQSIAETIDVNYSDVVPGLIGLIPRISISNVQLADTVMFTIGALSEWLADHPVMINSVLPLVLHALGNPELSVSSVSTLKKICRECKYDLPPYAANIVAVSQDVLMKQIHKTSQCMWLMQALGFLLSALQVEEILKNLHSLISPYIQQLEKLAEEIPNPSNKLAIVHILGLLSNLFTTLDVSHHEDDHEGPELRKLPVPQGPNPVVVVLQQVFQLIQKVLSKWLNDAQVVEAVCAIFEKSVKTLLDDFAPMVPQLCEMLGRMYSTVPQASALDLTRQLVHIFAHEPAHFPPIEALFLLVTSVTLSLFQQGPRDHPDIVDSFMQLLAQALKRKPDLFLCERLDVKAVFQCAVLALKFPEAPTVKASCGFFTELLPRCGEIESVGKVVQEDGRMLLIAVLEAIGGQASRSLMDCFADILFALNKHCFSLLSMWIKEALQPPGFPSARLSPEQKDTFSQQILRERVNKRRVKEMVKEFTLLCRGLHGTDYTADY.

HEAT repeat units lie at residues 24–54 (ENVE…QAQV), 56–88 (PQAW…KISR), 95–135 (TDQY…LSMM), 142–179 (AVAD…EFQT), 194–231 (LAVE…SWVQ), 236–268 (LQDC…NAIS), 276–325 (VNTL…ALLD), 330–372 (WQSF…DDIL), 375–438 (EAEK…YEML), 440–476 (AELL…FQSI), 487–522 (VVPG…WLAD), 524–558 (PVMI…CREC), 562–600 (LPPY…LLSA), 603–648 (VEEI…SNLF), 676–716 (PVVV…VKTL), 720–754 (FAPM…VHIF), 761–803 (FPPI…ALKR), 815–845 (VKAV…TELL), 860–893 (EDGR…FALN), and 897–931 (FSLL…QQIL). Positions 45 to 111 (AQKWLMQAQV…KAQLFTQITR (67 aa)) constitute an Importin N-terminal domain.

The protein belongs to the importin beta family. In terms of assembly, interacts with UBC9, RAN, RBM8A, eIF-1A and PAX6.

It is found in the cytoplasm. Its subcellular location is the nucleus. Functionally, functions in nuclear protein import as nuclear transport receptor. Serves as receptor for nuclear localization signals (NLS) in cargo substrates. Is thought to mediate docking of the importin/substrate complex to the nuclear pore complex (NPC) through binding to nucleoporin and the complex is subsequently translocated through the pore by an energy requiring, Ran-dependent mechanism. At the nucleoplasmic side of the NPC, Ran binds to the importin, the importin/substrate complex dissociates and importin is re-exported from the nucleus to the cytoplasm where GTP hydrolysis releases Ran. The directionality of nuclear import is thought to be conferred by an asymmetric distribution of the GTP- and GDP-bound forms of Ran between the cytoplasm and nucleus. Mediates the nuclear import of UBC9, the RBM8A/MAGOH complex, PAX6 and probably other members of the paired homeobox family. Also mediates nuclear export of eIF-1A, and the cytoplasmic release of eIF-1A is triggered by the loading of import substrates onto IPO13. This is Importin-13 (Ipo13) from Mus musculus (Mouse).